The following is a 254-amino-acid chain: AA9 family lytic polysaccharide monooxygenase A (254 aa).

The N-terminal stretch at 1–19 (MKYSILGLTALSFVASAAA) is a signal peptide. His20 lines the Cu(2+) pocket. Residue His20 is modified to Methylhistidine. Position 28 (Val28) interacts with (1,4-beta-D-glucosyl)n. Residue Asn52 is glycosylated (N-linked (GlcNAc...) asparagine). A disulfide bond links Cys60 and Cys186. Positions 66, 67, 77, and 86 each coordinate (1,4-beta-D-glucosyl)n. His97 contacts Cu(2+). Asn129 carries an N-linked (GlcNAc...) asparagine glycan. (1,4-beta-D-glucosyl)n is bound by residues Val148 and Arg159. Residues His166 and Gln181 each contribute to the O2 site. Residue Tyr183 coordinates Cu(2+).

Belongs to the polysaccharide monooxygenase AA9 family. Requires Cu(2+) as cofactor. The catalytically essential N-terminal histidine His-20 is post-translationally modified by methylation to prevent protonation of the histidine side chain, and protect the critical active site of the enzyme from oxidative damage.

Its subcellular location is the secreted. The enzyme catalyses [(1-&gt;4)-beta-D-glucosyl]n+m + reduced acceptor + O2 = 4-dehydro-beta-D-glucosyl-[(1-&gt;4)-beta-D-glucosyl]n-1 + [(1-&gt;4)-beta-D-glucosyl]m + acceptor + H2O.. Its activity is regulated as follows. The polyphenol cinnamtannin B1 contained in methanolic extract of Cinnamomum cassia (cinnamon) acts as an inhibitor of catalytic activity. In terms of biological role, lytic polysaccharide monooxygenase (LPMO) that depolymerizes crystalline and amorphous polysaccharides via the oxidation of scissile alpha- or beta-(1-4)-glycosidic bonds, yielding C1 or C4 oxidation product. Catalysis by LPMOs requires the reduction of the active-site copper from Cu(II) to Cu(I) by a reducing agent and H(2)O(2) or O(2) as a cosubstrate. Is able to cleave phosphoric acid swollen cellulose (PASC) in the presence of a reducing agent, yielding a range of cellooligosaccharides dominated by cellobiose and cellotriose. Activity is less sensitive to the reducing agent potential when cleaving xylan, suggesting that distinct catalytic mechanisms exist for xylan and glucan cleavage. This Panus similis (Lentinoid fungus) protein is AA9 family lytic polysaccharide monooxygenase A.